The sequence spans 129 residues: uncharacterized protein (129 aa).

A helical transmembrane segment spans residues Tyr8–Ile24.

It localises to the membrane. This is an uncharacterized protein from Rickettsia prowazekii (strain Madrid E).